The sequence spans 547 residues: Chaperonin GroEL 3 (547 aa).

Residues Thr-30–Pro-33, Lys-51, Asp-87–Thr-91, Gly-415, and Asp-496 contribute to the ATP site.

This sequence belongs to the chaperonin (HSP60) family. As to quaternary structure, forms a cylinder of 14 subunits composed of two heptameric rings stacked back-to-back. Interacts with the co-chaperonin GroES.

Its subcellular location is the cytoplasm. The enzyme catalyses ATP + H2O + a folded polypeptide = ADP + phosphate + an unfolded polypeptide.. Its function is as follows. Together with its co-chaperonin GroES, plays an essential role in assisting protein folding. The GroEL-GroES system forms a nano-cage that allows encapsulation of the non-native substrate proteins and provides a physical environment optimized to promote and accelerate protein folding. This is Chaperonin GroEL 3 from Bradyrhizobium sp. (strain ORS 278).